The chain runs to 118 residues: MPFVELETNLPAERLPPGLPLKLCEATATILGKPAERVNVTVRSGMPMVLAGSAEPCAQLLVSSIGVVGSAQQNQGHSARFFDFLTTELGLGPERIVIRFYPLEPWQIGKNRTVMTFL.

At Pro2 the chain carries N-acetylproline.

Belongs to the MIF family. In terms of assembly, homotrimer.

Its subcellular location is the cytoplasm. It catalyses the reaction D-dopachrome + H(+) = 5,6-dihydroxyindole + CO2. In terms of biological role, tautomerization of D-dopachrome with decarboxylation to give 5,6-dihydroxyindole (DHI). The sequence is that of D-dopachrome decarboxylase (DDT) from Gallus gallus (Chicken).